The following is a 538-amino-acid chain: Exo-alpha-bergamotene synthase (538 aa).

Mg(2+) is bound by residues aspartate 291, aspartate 295, aspartate 435, threonine 439, and glutamate 443. Positions 291-295 match the DDXXD motif motif; the sequence is DDIYD.

Belongs to the terpene synthase family. Mg(2+) is required as a cofactor. It depends on Mn(2+) as a cofactor.

The enzyme catalyses (2E,6E)-farnesyl diphosphate = (1S,5S,6R)-alpha-bergamotene + diphosphate. Its function is as follows. Catalyzes a mixture of sesquiterpenoids from (2E,6E)-farnesyl diphosphate. Catalyzes the formation of exo-alpha-bergamotene, as well as (E)-nerolidol, (Z)-alpha-bisabolene, (E)-beta-farnesene and beta-sesquiphellandrene. Also has activity towards geranyl diphosphate, but to a much lesser extent. This is Exo-alpha-bergamotene synthase from Lavandula angustifolia (Lavender).